We begin with the raw amino-acid sequence, 805 residues long: Mitochondrial intermediate peptidase (805 aa).

Residues 1-25 constitute a mitochondrion transit peptide; the sequence is MIQPLVKASRPRLWVCSDCLLRRTL. Position 578 (histidine 578) interacts with Zn(2+). Glutamate 579 is an active-site residue. Residues histidine 582 and histidine 585 each coordinate Zn(2+).

It belongs to the peptidase M3 family. Zn(2+) serves as cofactor.

It localises to the mitochondrion matrix. The enzyme catalyses Release of an N-terminal octapeptide as second stage of processing of some proteins imported into the mitochondrion.. Cleaves proteins, imported into the mitochondrion, to their mature size. While most mitochondrial precursor proteins are processed to the mature form in one step by mitochondrial processing peptidase (MPP), the sequential cleavage by MIP of an octapeptide after initial processing by MPP is a required step for a subgroup of nuclear-encoded precursor proteins destined for the matrix or the inner membrane. This Neurospora crassa (strain ATCC 24698 / 74-OR23-1A / CBS 708.71 / DSM 1257 / FGSC 987) protein is Mitochondrial intermediate peptidase (oct-1).